The chain runs to 243 residues: tRNA (guanine-N(1)-)-methyltransferase (243 aa).

S-adenosyl-L-methionine is bound by residues Gly108 and 127–132; that span reads LGDFVL.

The protein belongs to the RNA methyltransferase TrmD family. In terms of assembly, homodimer.

The protein resides in the cytoplasm. It carries out the reaction guanosine(37) in tRNA + S-adenosyl-L-methionine = N(1)-methylguanosine(37) in tRNA + S-adenosyl-L-homocysteine + H(+). Its function is as follows. Specifically methylates guanosine-37 in various tRNAs. In Streptococcus equi subsp. zooepidemicus (strain H70), this protein is tRNA (guanine-N(1)-)-methyltransferase.